A 287-amino-acid polypeptide reads, in one-letter code: tRNA selenocysteine 1-associated protein 1 (287 aa).

RRM domains follow at residues 3–86 (ASLW…YATY) and 96–175 (YSLF…VAIP).

The protein belongs to the RRM TRSPAP family. In terms of assembly, component of the tRNA(Sec) complex composed at least of EEFSEC, SECISBP2, SEPHS1, SEPSECS, TRNAU1AP and tRNA(Sec). Associates with mRNP and/or polysomes. Found in a complex with tRNA(Sec). Interacts with SEPSECS. Ubiquitous.

It localises to the nucleus. It is found in the cytoplasm. In terms of biological role, involved in the early steps of selenocysteine biosynthesis and tRNA(Sec) charging to the later steps resulting in the cotranslational incorporation of selenocysteine into selenoproteins. Stabilizes the SECISBP2, EEFSEC and tRNA(Sec) complex. May be involved in the methylation of tRNA(Sec). Enhances efficiency of selenoproteins synthesis. The chain is tRNA selenocysteine 1-associated protein 1 (Trnau1ap) from Rattus norvegicus (Rat).